A 290-amino-acid chain; its full sequence is Bifunctional protein FolD (290 aa).

NADP(+)-binding positions include 169–171, I194, and I235; that span reads GAS.

Belongs to the tetrahydrofolate dehydrogenase/cyclohydrolase family. As to quaternary structure, homodimer.

The enzyme catalyses (6R)-5,10-methylene-5,6,7,8-tetrahydrofolate + NADP(+) = (6R)-5,10-methenyltetrahydrofolate + NADPH. The catalysed reaction is (6R)-5,10-methenyltetrahydrofolate + H2O = (6R)-10-formyltetrahydrofolate + H(+). It participates in one-carbon metabolism; tetrahydrofolate interconversion. Catalyzes the oxidation of 5,10-methylenetetrahydrofolate to 5,10-methenyltetrahydrofolate and then the hydrolysis of 5,10-methenyltetrahydrofolate to 10-formyltetrahydrofolate. The polypeptide is Bifunctional protein FolD (Helicobacter pylori (strain HPAG1)).